Here is a 976-residue protein sequence, read N- to C-terminus: Vacuolar membrane protease (976 aa).

At 1-51 the chain is on the cytoplasmic side; the sequence is MPLSTGLTLSSLNVMEKADNHYNMMTKQPPALSPVDMVSSRRGFNPIAFTP. The chain crosses the membrane as a helical span at residues 52-72; the sequence is WPVTILSSLVYLAFIIPIIVV. The Vacuolar portion of the chain corresponds to 73-399; it reads HHLVPPAPKE…DNGNDGKLNN (327 aa). N-linked (GlcNAc...) asparagine glycans are attached at residues Asn-147 and Asn-150. Zn(2+) is bound by residues His-206 and Asp-218. Glu-252 acts as the Proton acceptor in catalysis. Glu-253, Glu-278, and His-351 together coordinate Zn(2+). A helical transmembrane segment spans residues 400 to 420; sequence GAGTLGVWFDFYGSSFAVFEL. At 421-427 the chain is on the cytoplasmic side; it reads NTLFGHS. A helical membrane pass occupies residues 428-448; sequence VALLVVAPLLLIATCVTLYTL. The Vacuolar segment spans residues 449-477; that stretch reads DKMYMFSMYTYLSESGGQVSLYGLRGLFR. The helical transmembrane segment at 478–498 threads the bilayer; the sequence is FPLILGISTALTIGLAFLLMK. Residues 499 to 519 lie on the Cytoplasmic side of the membrane; the sequence is ANPFIIYSSPYAVWNPSALHR. Residues 520–540 form a helical membrane-spanning segment; the sequence is AYAFTWMFGMMWVLLVIATVY. Over 541-550 the chain is Vacuolar; the sequence is QKQHGIASSY. Residues 551–571 form a helical membrane-spanning segment; the sequence is FIVFYFAGVSIATWISYLELF. At 572 to 675 the chain is on the cytoplasmic side; it reads GLPTTQDYAR…HRLEQRWSIN (104 aa). Positions 590–633 are disordered; sequence TPSSDSRLLAPSADELPPSGSAAGHDFNPEDVEDEEPTESTSLL. A compositionally biased stretch (acidic residues) spans 618-627; the sequence is PEDVEDEEPT. The helical transmembrane segment at 676–696 threads the bilayer; sequence LISSAWILQFLFVAPIVIILL. Residues 697–718 are Vacuolar-facing; sequence GQLGLFLTSATYQIGADGGSQL. Residues 719 to 739 traverse the membrane as a helical segment; sequence VIYVGIAVLSVLILLPLFPFI. Topologically, residues 740 to 745 are cytoplasmic; the sequence is HRFTYH. A helical transmembrane segment spans residues 746–766; that stretch reads IPTFLLFVLIGTLVYNLTAFP. Residues 767–976 lie on the Vacuolar side of the membrane; that stretch reads FSHSNRLKVA…LVEGSHSFKL (210 aa). N-linked (GlcNAc...) asparagine glycosylation occurs at Asn-848.

It belongs to the peptidase M28 family. The cofactor is Zn(2+).

The protein resides in the vacuole membrane. Its function is as follows. May be involved in vacuolar sorting and osmoregulation. The protein is Vacuolar membrane protease of Arthroderma otae (strain ATCC MYA-4605 / CBS 113480) (Microsporum canis).